Reading from the N-terminus, the 395-residue chain is Acetyl-CoA acetyltransferase (395 aa).

Residue Cys-90 is the Acyl-thioester intermediate of the active site. CoA is bound by residues Tyr-185 and Lys-230. Tyr-185 contacts K(+). 3 residues coordinate K(+): Ala-246, Ala-247, and Ala-249. Ser-250 contributes to the CoA binding site. Position 347 (Val-347) interacts with K(+). Residues His-351 and Cys-381 each act as proton acceptor in the active site.

The protein belongs to the thiolase-like superfamily. Thiolase family. In terms of assembly, homotetramer.

The protein localises to the cytoplasm. The catalysed reaction is 2 acetyl-CoA = acetoacetyl-CoA + CoA. Its pathway is metabolic intermediate biosynthesis; (R)-mevalonate biosynthesis; (R)-mevalonate from acetyl-CoA: step 1/3. In terms of biological role, acetyl-CoA acetyltransferase; part of the first module of ergosterol biosynthesis pathway that includes the early steps of the pathway, conserved across all eukaryotes, and which results in the formation of mevalonate from acetyl-coenzyme A (acetyl-CoA). Erg10 catalyzes the formation of acetoacetyl-CoA from acetyl-CoA. The first module starts with the action of the cytosolic acetyl-CoA acetyltransferase eg10 that catalyzes the formation of acetoacetyl-CoA. The hydroxymethylglutaryl-CoA synthases erg13 then condenses acetyl-CoA with acetoacetyl-CoA to form HMG-CoA. The rate-limiting step of the early module is the reduction to mevalonate by the 3-hydroxy-3-methylglutaryl-coenzyme A (HMG-CoA) reductases hcs1. This chain is Acetyl-CoA acetyltransferase (erg10), found in Schizosaccharomyces pombe (strain 972 / ATCC 24843) (Fission yeast).